Reading from the N-terminus, the 213-residue chain is NADH dehydrogenase [ubiquinone] iron-sulfur protein 7, mitochondrial (213 aa).

The transit peptide at 1–37 (MAVLSAPGLRGFRILGLRSSVGPAVQARSVHQSVATD) directs the protein to the mitochondrion. Residues 30-44 (VHQSVATDGPSSTQP) show a composition bias toward polar residues. Residues 30–53 (VHQSVATDGPSSTQPALPKARAVA) are disordered. Residues Cys-88 and Cys-89 each contribute to the [4Fe-4S] cluster site. Arg-111 bears the Hydroxyarginine mark. [4Fe-4S] cluster is bound by residues Cys-153 and Cys-183.

It belongs to the complex I 20 kDa subunit family. Core subunit of respiratory chain NADH dehydrogenase (Complex I) which is composed of 45 different subunits. This is a component of the iron-sulfur (IP) fragment of the enzyme. It depends on [4Fe-4S] cluster as a cofactor. Post-translationally, hydroxylated ar Arg-111 by NDUFAF5 early in the pathway of assembly of complex I, before the formation of the juncture between peripheral and membrane arms.

The protein resides in the mitochondrion inner membrane. It catalyses the reaction a ubiquinone + NADH + 5 H(+)(in) = a ubiquinol + NAD(+) + 4 H(+)(out). Its function is as follows. Core subunit of the mitochondrial membrane respiratory chain NADH dehydrogenase (Complex I) which catalyzes electron transfer from NADH through the respiratory chain, using ubiquinone as an electron acceptor. Essential for the catalytic activity of complex I. In Pan troglodytes (Chimpanzee), this protein is NADH dehydrogenase [ubiquinone] iron-sulfur protein 7, mitochondrial (NDUFS7).